Consider the following 514-residue polypeptide: MTDKLIIFDTTLRDGEQSPGASMTKEEKIRIAKHLERMKVDVIEAGFAASSNGDFDAIHTIAGLVKDSTICSLARANDKDIQRAADALKPANSARIHTFIATSPLHMEKKLRMTPDQVFEQARLAVRFARKFTDNVEFSPEDGSRSDLDFLCRVLEAVIAEGATTINIADTVGYGVPELYGNLVKTLRERIPNSDKAIFSVHCHNDLGMAVANSLAGVKIGGARQIECTINGLGERAGNTSLEEIVMAVKTRKDYFGLDVGIDTTQIVPTSKLVSQITGFVVQPNKAVVGANAFAHASGIHQDGVLKARDTYEIMRAEDVGWTANKIVLGKLSGRNAFKQRLQELGVSLDSEAELNAAFMRFKDLADRKAEIFDEDIIAIVSEESALAQEQEHFKFVSLSQRSETGEQPQAKVVFAVEGKEVTGEARGNGPVDATFNAIEGEVGSGSELLLYSVNAITTGTQAQGEVTVRLSKSGRIVNGVGTDPDIVAASAKAYISALNKLHSKDDKLNPQRA.

The Pyruvate carboxyltransferase domain occupies 5-268 (LIIFDTTLRD…DVGIDTTQIV (264 aa)). Positions 14, 202, 204, and 239 each coordinate Mn(2+). The interval 395–514 (KFVSLSQRSE…KDDKLNPQRA (120 aa)) is regulatory domain.

The protein belongs to the alpha-IPM synthase/homocitrate synthase family. LeuA type 1 subfamily. Homodimer. Requires Mn(2+) as cofactor.

The protein resides in the cytoplasm. It catalyses the reaction 3-methyl-2-oxobutanoate + acetyl-CoA + H2O = (2S)-2-isopropylmalate + CoA + H(+). Its pathway is amino-acid biosynthesis; L-leucine biosynthesis; L-leucine from 3-methyl-2-oxobutanoate: step 1/4. Functionally, catalyzes the condensation of the acetyl group of acetyl-CoA with 3-methyl-2-oxobutanoate (2-ketoisovalerate) to form 3-carboxy-3-hydroxy-4-methylpentanoate (2-isopropylmalate). This is 2-isopropylmalate synthase from Burkholderia cenocepacia (strain HI2424).